Reading from the N-terminus, the 144-residue chain is uncharacterized protein (144 aa).

4 helical membrane passes run 16–36 (FLIFSKVAMLTFLTVGIGAIF), 48–68 (GFIVVAGIVSLIGMTIGALII), 87–107 (LLPEAYYICIELFGYGSLVLL), and 120–140 (VMSLLMAGLFILVVLVIWYFG).

It is found in the cell membrane. This is an uncharacterized protein from Methanocaldococcus jannaschii (strain ATCC 43067 / DSM 2661 / JAL-1 / JCM 10045 / NBRC 100440) (Methanococcus jannaschii).